Reading from the N-terminus, the 32-residue chain is Corticostatin-related peptide RK-1 (32 aa).

Intrachain disulfides connect C3-C29, C5-C19, and C9-C28.

Its subcellular location is the secreted. Functionally, has antimicrobial activity against E.coli and activates ion channel activity. The sequence is that of Corticostatin-related peptide RK-1 from Oryctolagus cuniculus (Rabbit).